The sequence spans 141 residues: 3-hydroxyacyl-[acyl-carrier-protein] dehydratase FabZ (141 aa).

H49 is a catalytic residue.

This sequence belongs to the thioester dehydratase family. FabZ subfamily.

The protein localises to the cytoplasm. It catalyses the reaction a (3R)-hydroxyacyl-[ACP] = a (2E)-enoyl-[ACP] + H2O. Its function is as follows. Involved in unsaturated fatty acids biosynthesis. Catalyzes the dehydration of short chain beta-hydroxyacyl-ACPs and long chain saturated and unsaturated beta-hydroxyacyl-ACPs. The sequence is that of 3-hydroxyacyl-[acyl-carrier-protein] dehydratase FabZ (fabZ2) from Enterococcus faecalis (strain ATCC 700802 / V583).